An 85-amino-acid polypeptide reads, in one-letter code: Small ribosomal subunit protein bS18A (85 aa).

It belongs to the bacterial ribosomal protein bS18 family. Part of the 30S ribosomal subunit. Forms a tight heterodimer with protein bS6.

Binds as a heterodimer with protein bS6 to the central domain of the 16S rRNA, where it helps stabilize the platform of the 30S subunit. This is Small ribosomal subunit protein bS18A from Mycolicibacterium smegmatis (strain ATCC 700084 / mc(2)155) (Mycobacterium smegmatis).